The chain runs to 287 residues: Ret finger protein-like 4A (287 aa).

The RING-type; degenerate zinc-finger motif lies at 11–53; sequence CYFCFRCLESPVYLNCGYICCLKCLDSLEKSPEGDGVLCPTCS. Positions 78–278 constitute a B30.2/SPRY domain; that stretch reads EPQLNFILTM…LSICPVTNPG (201 aa).

In terms of assembly, interacts with PSMB1, UBE2A and CCNB1. Expressed in the ovaries and oocytes (at protein level). Expression restricted to gonads. In testis, present at later stages of spermatogeneis and abundant in elongating spermatids.

It localises to the cytoplasm. The protein localises to the nucleus. This Mus musculus (Mouse) protein is Ret finger protein-like 4A (Rfpl4a).